Here is a 65-residue protein sequence, read N- to C-terminus: DNA-directed RNA polymerase subunit Rpo10 (65 aa).

Cysteine 7, cysteine 10, cysteine 44, and cysteine 45 together coordinate Zn(2+).

It belongs to the archaeal Rpo10/eukaryotic RPB10 RNA polymerase subunit family. In terms of assembly, part of the RNA polymerase complex. It depends on Zn(2+) as a cofactor.

Its subcellular location is the cytoplasm. The catalysed reaction is RNA(n) + a ribonucleoside 5'-triphosphate = RNA(n+1) + diphosphate. In terms of biological role, DNA-dependent RNA polymerase (RNAP) catalyzes the transcription of DNA into RNA using the four ribonucleoside triphosphates as substrates. This is DNA-directed RNA polymerase subunit Rpo10 from Pyrobaculum arsenaticum (strain DSM 13514 / JCM 11321 / PZ6).